A 253-amino-acid chain; its full sequence is MARMGGQRRLKALAAPRFWPILRKEYKWAVKPRPGPHPAEKSLPLLLIVRNVLGYAQTAREARKLISEGHFRVDGVVRKDYKFPVGFMDVIEVVDTGEKFRMLPYPVKFFKLHPIPEEEGDLKPVRIENKTTVKGGHVQLNLHDGRNILVRVKDPRNPVEDVYRTMDTLLITVPGQEIKGHIKFGEGAIAIIVGGRNVGRVGVVKSVQKGWGRKRTLVTLEDASGNLFQTSLDYVFVIGLDRPVISLPEGAWK.

In terms of domain architecture, S4 RNA-binding spans 43-114 (LPLLLIVRNV…YPVKFFKLHP (72 aa)).

It belongs to the eukaryotic ribosomal protein eS4 family.

This chain is Small ribosomal subunit protein eS4 (rps4e), found in Aeropyrum pernix (strain ATCC 700893 / DSM 11879 / JCM 9820 / NBRC 100138 / K1).